The following is a 551-amino-acid chain: MEEAELVKGRLQAITDKRKIQEEISQKRLKIEEEKLKHQHLKKKALREKWLLDGIGSGKEHEEMRKQNQQDQHQTQVLEQSILRLEKEIQDLEKAELQISANEEAILKKLKSIEKTTEDIIRSVKVEKEENPEESIEDIYANIPDLPSSYIPSRLRKERNEGPDDEQNRKALYAMEIKVEKDLKTGESVVLSSIPLPSDDFKSTGIKVYEDRQKSVYAVSSNQNTTYNGTDGLAPVEVEDLLRQASERNSKSPTEYHEPVYANPFCRPVTPQRERVISPGPNFQERIMMKTNGLGNHANESAHNMTDGLSERRSNGPTHTSPTRPTPQPRSMVQQVEEMVHTQQKRMASPWEESSNRQNEHEVSPRMELSPSRASPGKSGPQCSSPTCQEETEDVRYNIVHSLPSDVDDTEPVTMIFMGYQQADDNEEEKKLLTGYDGVIHAELVVIDDEAEDNEGQTERPSYHPVAPYNQVYQPPKPTPLPRKRAEVRPYENTNHKSPHKNSISLKEQEERLGSPARHSPLDVPVAGDGTEDPSLTALRIRMAKLGKKVI.

N-acetylmethionine is present on methionine 1. The stretch at glutamine 12–isoleucine 106 forms a coiled coil. Residue lysine 125 forms a Glycyl lysine isopeptide (Lys-Gly) (interchain with G-Cter in SUMO2) linkage. Position 135 is a phosphoserine (serine 135). Lysine 178 participates in a covalent cross-link: Glycyl lysine isopeptide (Lys-Gly) (interchain with G-Cter in SUMO1); alternate. Lysine 178 is covalently cross-linked (Glycyl lysine isopeptide (Lys-Gly) (interchain with G-Cter in SUMO2); alternate). Residues glutamate 247 to glutamate 258 show a composition bias toward basic and acidic residues. The interval glutamate 247 to cysteine 266 is disordered. Phosphothreonine is present on threonine 270. Disordered stretches follow at residues leucine 294–glutamate 390 and alanine 451–aspartate 533. 2 positions are modified to phosphoserine: serine 321 and serine 349. Residues histidine 341 to glutamate 353 show a composition bias toward polar residues. Basic and acidic residues predominate over residues serine 354–proline 365. Phosphoserine is present on residues serine 370, serine 375, serine 384, serine 385, serine 498, serine 515, and serine 520.

It belongs to the paralemmin family. As to quaternary structure, interacts with GLUL. Phosphorylated. In terms of tissue distribution, ubiquitous. Expressed at highest levels in the heart and lung.

It localises to the cytoplasm. The protein localises to the cell projection. It is found in the dendrite. Its subcellular location is the dendritic spine. The protein is Palmdelphin (Palmd) of Mus musculus (Mouse).